A 485-amino-acid chain; its full sequence is Glutamate--tRNA ligase (485 aa).

Positions 11–21 (PSPTGLLHIGN) match the 'HIGH' region motif. Residues 255–259 (KLSKR) carry the 'KMSKS' region motif. Residue Lys258 coordinates ATP.

The protein belongs to the class-I aminoacyl-tRNA synthetase family. Glutamate--tRNA ligase type 1 subfamily. As to quaternary structure, monomer.

The protein localises to the cytoplasm. The enzyme catalyses tRNA(Glu) + L-glutamate + ATP = L-glutamyl-tRNA(Glu) + AMP + diphosphate. In terms of biological role, catalyzes the attachment of glutamate to tRNA(Glu) in a two-step reaction: glutamate is first activated by ATP to form Glu-AMP and then transferred to the acceptor end of tRNA(Glu). The polypeptide is Glutamate--tRNA ligase (Streptococcus sanguinis (strain SK36)).